The following is a 370-amino-acid chain: Sensor protein GtcS (370 aa).

A run of 2 helical transmembrane segments spans residues 2–22 and 40–60; these read ITAY…VFYL and AWIV…VYLY. The region spanning 66–118 is the HAMP domain; it reads KRITGPLEKITDAIQKMREGEFAQRLCFKADYELTLIQEHFNEMVAHLEKTEA. In terms of domain architecture, Histidine kinase spans 133 to 355; the sequence is DLSHDFKTPI…RLENDLPYRL (223 aa).

The protein localises to the cell membrane. The catalysed reaction is ATP + protein L-histidine = ADP + protein N-phospho-L-histidine.. Member of the two-component regulatory system GtcS/GtcR which may act in the control of the transcription of the grs operon which encodes the multienzymes involved in the biosynthesis of the peptide antibiotic gramicidin S. Probably activates GtcR by phosphorylation. The chain is Sensor protein GtcS (gtcS) from Aneurinibacillus migulanus (Bacillus migulanus).